The primary structure comprises 184 residues: ATP synthase subunit b, chloroplastic (184 aa).

The helical transmembrane segment at Ile29–Leu49 threads the bilayer.

It belongs to the ATPase B chain family. In terms of assembly, F-type ATPases have 2 components, F(1) - the catalytic core - and F(0) - the membrane proton channel. F(1) has five subunits: alpha(3), beta(3), gamma(1), delta(1), epsilon(1). F(0) has four main subunits: a(1), b(1), b'(1) and c(10-14). The alpha and beta chains form an alternating ring which encloses part of the gamma chain. F(1) is attached to F(0) by a central stalk formed by the gamma and epsilon chains, while a peripheral stalk is formed by the delta, b and b' chains.

The protein localises to the plastid. It localises to the chloroplast thylakoid membrane. F(1)F(0) ATP synthase produces ATP from ADP in the presence of a proton or sodium gradient. F-type ATPases consist of two structural domains, F(1) containing the extramembraneous catalytic core and F(0) containing the membrane proton channel, linked together by a central stalk and a peripheral stalk. During catalysis, ATP synthesis in the catalytic domain of F(1) is coupled via a rotary mechanism of the central stalk subunits to proton translocation. In terms of biological role, component of the F(0) channel, it forms part of the peripheral stalk, linking F(1) to F(0). This is ATP synthase subunit b, chloroplastic from Psilotum nudum (Whisk fern).